Here is a 327-residue protein sequence, read N- to C-terminus: Pantothenate kinase (327 aa).

105–112 (GSVAVGKS) is an ATP binding site.

It belongs to the prokaryotic pantothenate kinase family.

The protein localises to the cytoplasm. The enzyme catalyses (R)-pantothenate + ATP = (R)-4'-phosphopantothenate + ADP + H(+). The protein operates within cofactor biosynthesis; coenzyme A biosynthesis; CoA from (R)-pantothenate: step 1/5. In Cutibacterium acnes (strain DSM 16379 / KPA171202) (Propionibacterium acnes), this protein is Pantothenate kinase.